The following is a 453-amino-acid chain: tRNA modification GTPase MnmE (453 aa).

Positions 22, 79, and 119 each coordinate (6S)-5-formyl-5,6,7,8-tetrahydrofolate. Residues 215–376 (GMKVVIAGRP…LKQHLKSLMG (162 aa)) form the TrmE-type G domain. A K(+)-binding site is contributed by asparagine 225. Residues 225-230 (NAGKSS), 244-250 (TEIAGTT), 269-272 (DTAG), and 334-337 (NKAD) contribute to the GTP site. Residue serine 229 coordinates Mg(2+). 3 residues coordinate K(+): threonine 244, isoleucine 246, and threonine 249. Threonine 250 contributes to the Mg(2+) binding site. Residue lysine 453 coordinates (6S)-5-formyl-5,6,7,8-tetrahydrofolate.

This sequence belongs to the TRAFAC class TrmE-Era-EngA-EngB-Septin-like GTPase superfamily. TrmE GTPase family. In terms of assembly, homodimer. Heterotetramer of two MnmE and two MnmG subunits. K(+) serves as cofactor.

The protein localises to the cytoplasm. Functionally, exhibits a very high intrinsic GTPase hydrolysis rate. Involved in the addition of a carboxymethylaminomethyl (cmnm) group at the wobble position (U34) of certain tRNAs, forming tRNA-cmnm(5)s(2)U34. This is tRNA modification GTPase MnmE from Shewanella denitrificans (strain OS217 / ATCC BAA-1090 / DSM 15013).